A 498-amino-acid polypeptide reads, in one-letter code: 3-octaprenyl-4-hydroxybenzoate carboxy-lyase (498 aa).

Residue Asn-175 participates in Mn(2+) binding. Prenylated FMN is bound by residues 178-180 (IYR), 192-194 (RWL), and 197-198 (RG). Glu-241 lines the Mn(2+) pocket. The Proton donor role is filled by Asp-290.

Belongs to the UbiD family. As to quaternary structure, homohexamer. The cofactor is prenylated FMN. Requires Mn(2+) as cofactor.

The protein resides in the cell membrane. The catalysed reaction is a 4-hydroxy-3-(all-trans-polyprenyl)benzoate + H(+) = a 2-(all-trans-polyprenyl)phenol + CO2. It participates in cofactor biosynthesis; ubiquinone biosynthesis. Functionally, catalyzes the decarboxylation of 3-octaprenyl-4-hydroxy benzoate to 2-octaprenylphenol, an intermediate step in ubiquinone biosynthesis. The polypeptide is 3-octaprenyl-4-hydroxybenzoate carboxy-lyase (Yersinia pestis bv. Antiqua (strain Antiqua)).